The sequence spans 65 residues: Large ribosomal subunit protein bL35 (65 aa).

A disordered region spans residues 1–25 (MPKMKSHRGAAKRFKKTGTGKLKRA).

This sequence belongs to the bacterial ribosomal protein bL35 family.

This chain is Large ribosomal subunit protein bL35, found in Clostridium botulinum (strain Alaska E43 / Type E3).